Consider the following 317-residue polypeptide: Ribose-phosphate pyrophosphokinase (317 aa).

ATP contacts are provided by residues 43–45 (DGE) and 102–103 (RQ). 2 residues coordinate Mg(2+): His-136 and Asp-175. Lys-198 is an active-site residue. Residues Arg-200, Asp-224, and 228-232 (DTAGT) contribute to the D-ribose 5-phosphate site.

Belongs to the ribose-phosphate pyrophosphokinase family. Class I subfamily. Homohexamer. Mg(2+) serves as cofactor.

It is found in the cytoplasm. The enzyme catalyses D-ribose 5-phosphate + ATP = 5-phospho-alpha-D-ribose 1-diphosphate + AMP + H(+). The protein operates within metabolic intermediate biosynthesis; 5-phospho-alpha-D-ribose 1-diphosphate biosynthesis; 5-phospho-alpha-D-ribose 1-diphosphate from D-ribose 5-phosphate (route I): step 1/1. In terms of biological role, involved in the biosynthesis of the central metabolite phospho-alpha-D-ribosyl-1-pyrophosphate (PRPP) via the transfer of pyrophosphoryl group from ATP to 1-hydroxyl of ribose-5-phosphate (Rib-5-P). The protein is Ribose-phosphate pyrophosphokinase of Corynebacterium ammoniagenes (Brevibacterium ammoniagenes).